Consider the following 284-residue polypeptide: 2,3,4,5-tetrahydropyridine-2,6-dicarboxylate N-succinyltransferase (284 aa).

Substrate is bound by residues R111 and D148.

This sequence belongs to the transferase hexapeptide repeat family. As to quaternary structure, homotrimer.

The protein resides in the cytoplasm. It catalyses the reaction (S)-2,3,4,5-tetrahydrodipicolinate + succinyl-CoA + H2O = (S)-2-succinylamino-6-oxoheptanedioate + CoA. The protein operates within amino-acid biosynthesis; L-lysine biosynthesis via DAP pathway; LL-2,6-diaminopimelate from (S)-tetrahydrodipicolinate (succinylase route): step 1/3. In Agrobacterium fabrum (strain C58 / ATCC 33970) (Agrobacterium tumefaciens (strain C58)), this protein is 2,3,4,5-tetrahydropyridine-2,6-dicarboxylate N-succinyltransferase.